An 853-amino-acid polypeptide reads, in one-letter code: MSLDSEVSVSSSSGRDWFFPSPSFFRSSPSQYGRRFHTNSNTHSAPSSTYPSGIRHRRRVKFSRTPTTSSNEKPQISIVSDKPSAISKNNLNWLSQFGLQFALVTLTIVFLLLLLLRNTHLESQVNKLQGEILRLHACHQLDTLNVSSSTAHKSQDTHPCSCENFKRNLALFLSFMLLLIPLIIFKYIDYVSRSRLSENISEQVSLNKQIAYRVDVFLSVYPYAKPLVLLVATLLLIFLGGLTLFGVTTEDLGHCLWLSWTYVADSGNHASSEGIGPRLVAVSISFGGMLIFAMMLGLVSDAISEKFDSLRKGKSEVVEQNHTLILGWSDKLGSLLNQLAIANESLGGGTIAVMAERDKEDMELDIGKMEFDFKGTSVICRSGSPLILADLKKVSVSKARTIIVLAEDGNADQSDARALRTVLSLTGVKEGLRGHIVVEMSDLDNEVLVKLVGGDLVETVVAHDVIGRLMIQCARQPGLAQIWEDILGFENCEFYIKRWPQLDGMLFEDVLISFPAAIPCGIKVASYGGKIILNPDDSYVLQEGDEVLVIAEDDDTYAPAPLPMVRRGSLPKDFVYPKSPERILFCGWRRDMEDMITVLDASLAPDSELWMFNDVPEKEREKKLIDGGLDISRLENISLVNREGNAVIRRHLESLPLESFDSILILADESVEDSAIQADSRSLATLLLIRDIQARRLPYVAMASQTQGGNFSKGSWIGEMKQASDKTVIISEILDPRTKNLLSMSKISDYVLSNELVSMALAMVAEDRQINDVLEELFAEEGNEMHIRQADIYLREGEEMSFYEIMLRARQRREILIGYRLANAERAVINPPAKTGRRKWSLKDVFVVITEKE.

The span at 1–30 (MSLDSEVSVSSSSGRDWFFPSPSFFRSSPS) shows a compositional bias: low complexity. Residues 1–55 (MSLDSEVSVSSSSGRDWFFPSPSFFRSSPSQYGRRFHTNSNTHSAPSSTYPSGIR) are disordered. Residues 38-51 (TNSNTHSAPSSTYP) show a composition bias toward polar residues. Residues 96-116 (QFGLQFALVTLTIVFLLLLLL) traverse the membrane as a helical segment. Residues 117 to 137 (RNTHLESQVNKLQGEILRLHA) are a coiled coil. 3 helical membrane-spanning segments follow: residues 168 to 188 (NLALFLSFMLLLIPLIIFKYI), 227 to 247 (LVLLVATLLLIFLGGLTLFGV), and 279 to 299 (LVAVSISFGGMLIFAMMLGLV). RCK N-terminal domains are found at residues 320–461 (QNHT…ETVV) and 580–752 (PERI…DYVL).

Belongs to the castor/pollux (TC 1.A.1.23) family. In terms of assembly, homooligomer. In terms of tissue distribution, expressed in infected and uninfected roots, leaves, seed pods, and flower buds.

It localises to the nucleus membrane. Ion channel with a moderate preference for potassium over sodium and calcium. Involved in perinuclear calcium spiking but not in cytosolic calcium influx. Closed at negative voltages in presence of magnesium. Required for early signal transduction events leading to endosymbiosis. Acts early in a signal transduction chain leading from the perception of Nod factor to the activation of calcium spiking. Also involved in fungal entry into root epidermal cells during the establishment of the arbuscular mycorrhizal symbiosis. This chain is Ion channel CASTOR (CASTOR), found in Lotus japonicus (Lotus corniculatus var. japonicus).